The chain runs to 231 residues: Chromosome partition protein MukE (231 aa).

Positions 195-231 are disordered; it reads MIRDGEAMPVEGSLSLKDDSDDNDRTDDTAPETGEDE. Positions 213–231 are enriched in acidic residues; the sequence is DSDDNDRTDDTAPETGEDE.

It belongs to the MukE family. As to quaternary structure, interacts, and probably forms a ternary complex, with MukF and MukB. The complex formation is stimulated by calcium or magnesium.

It localises to the cytoplasm. It is found in the nucleoid. Involved in chromosome condensation, segregation and cell cycle progression. May participate in facilitating chromosome segregation by condensation DNA from both sides of a centrally located replisome during cell division. Probably acts via its interaction with MukB and MukF. This Pectobacterium atrosepticum (strain SCRI 1043 / ATCC BAA-672) (Erwinia carotovora subsp. atroseptica) protein is Chromosome partition protein MukE.